The primary structure comprises 368 residues: C6 finger domain transcription factor tcpZ (368 aa).

The zn(2)-C6 fungal-type DNA-binding region spans 30–56; sequence CDACHASKVRCSGEPICARCQRDNVAC. The tract at residues 84–109 is disordered; that stretch reads FIEQRQRPAASQPPGHGTSRDSSVCA.

The protein localises to the nucleus. Functionally, transcription factor that specifically regulates the thioclapurine biosynthesis gene cluster. The polypeptide is C6 finger domain transcription factor tcpZ (Claviceps purpurea (strain 20.1) (Ergot fungus)).